The sequence spans 20 residues: Ranalexin-1Ca (20 aa).

A disulfide bridge connects residues cysteine 14 and cysteine 20.

As to expression, expressed by the skin glands.

The protein resides in the secreted. Its function is as follows. Antibacterial activity against Gram-positive bacterium S.aureus (MIC=17 uM) and Gram-negative bacterium E.coli (MIC=4 uM). Has activity against C.albicans (MIC=14 uM). This is Ranalexin-1Ca from Lithobates clamitans (Green frog).